Reading from the N-terminus, the 406-residue chain is Exodeoxyribonuclease 7 large subunit (406 aa).

This sequence belongs to the XseA family. As to quaternary structure, heterooligomer composed of large and small subunits.

Its subcellular location is the cytoplasm. It carries out the reaction Exonucleolytic cleavage in either 5'- to 3'- or 3'- to 5'-direction to yield nucleoside 5'-phosphates.. Functionally, bidirectionally degrades single-stranded DNA into large acid-insoluble oligonucleotides, which are then degraded further into small acid-soluble oligonucleotides. This Thermobifida fusca (strain YX) protein is Exodeoxyribonuclease 7 large subunit.